The following is a 397-amino-acid chain: Sulfate adenylyltransferase (397 aa).

Belongs to the sulfate adenylyltransferase family.

The catalysed reaction is sulfate + ATP + H(+) = adenosine 5'-phosphosulfate + diphosphate. Its pathway is sulfur metabolism; hydrogen sulfide biosynthesis; sulfite from sulfate: step 1/3. This chain is Sulfate adenylyltransferase (sat), found in Allochromatium vinosum (strain ATCC 17899 / DSM 180 / NBRC 103801 / NCIMB 10441 / D) (Chromatium vinosum).